A 350-amino-acid chain; its full sequence is Adenine deaminase (350 aa).

Zn(2+)-binding residues include H24, H26, and H207. The Proton donor role is filled by E210. D288 is a Zn(2+) binding site. Position 289 (D289) interacts with substrate.

Belongs to the metallo-dependent hydrolases superfamily. Adenosine and AMP deaminases family. Adenine deaminase type 2 subfamily. It depends on Zn(2+) as a cofactor.

It carries out the reaction adenine + H2O + H(+) = hypoxanthine + NH4(+). In terms of biological role, catalyzes the hydrolytic deamination of adenine to hypoxanthine. Plays an important role in the purine salvage pathway and in nitrogen catabolism. The protein is Adenine deaminase of Paraburkholderia phytofirmans (strain DSM 17436 / LMG 22146 / PsJN) (Burkholderia phytofirmans).